The sequence spans 156 residues: 6,7-dimethyl-8-ribityllumazine synthase (156 aa).

Residues Phe-22, 57–59 (AYE), and 81–83 (TVI) contribute to the 5-amino-6-(D-ribitylamino)uracil site. 86-87 (GT) is a binding site for (2S)-2-hydroxy-3-oxobutyl phosphate. Residue His-89 is the Proton donor of the active site. Phe-114 lines the 5-amino-6-(D-ribitylamino)uracil pocket. Residue Arg-128 participates in (2S)-2-hydroxy-3-oxobutyl phosphate binding.

The protein belongs to the DMRL synthase family. In terms of assembly, forms an icosahedral capsid composed of 60 subunits, arranged as a dodecamer of pentamers.

It carries out the reaction (2S)-2-hydroxy-3-oxobutyl phosphate + 5-amino-6-(D-ribitylamino)uracil = 6,7-dimethyl-8-(1-D-ribityl)lumazine + phosphate + 2 H2O + H(+). The protein operates within cofactor biosynthesis; riboflavin biosynthesis; riboflavin from 2-hydroxy-3-oxobutyl phosphate and 5-amino-6-(D-ribitylamino)uracil: step 1/2. Functionally, catalyzes the formation of 6,7-dimethyl-8-ribityllumazine by condensation of 5-amino-6-(D-ribitylamino)uracil with 3,4-dihydroxy-2-butanone 4-phosphate. This is the penultimate step in the biosynthesis of riboflavin. In Serratia proteamaculans (strain 568), this protein is 6,7-dimethyl-8-ribityllumazine synthase.